Consider the following 119-residue polypeptide: Acidic phospholipase A2 DE-II (119 aa).

7 cysteine pairs are disulfide-bonded: Cys-11–Cys-72, Cys-26–Cys-118, Cys-28–Cys-44, Cys-43–Cys-99, Cys-50–Cys-92, Cys-60–Cys-85, and Cys-79–Cys-90. Residues Tyr-27, Gly-29, and Gly-31 each contribute to the Ca(2+) site. His-47 is a catalytic residue. Position 48 (Asp-48) interacts with Ca(2+). Asp-93 is a catalytic residue.

It belongs to the phospholipase A2 family. Group I subfamily. D49 sub-subfamily. It depends on Ca(2+) as a cofactor. In terms of tissue distribution, expressed by the venom gland.

Its subcellular location is the secreted. It carries out the reaction a 1,2-diacyl-sn-glycero-3-phosphocholine + H2O = a 1-acyl-sn-glycero-3-phosphocholine + a fatty acid + H(+). In terms of biological role, PLA2 catalyzes the calcium-dependent hydrolysis of the 2-acyl groups in 3-sn-phosphoglycerides. This chain is Acidic phospholipase A2 DE-II, found in Naja melanoleuca (Forest cobra).